The chain runs to 415 residues: Tyrosine--tRNA ligase (415 aa).

Positions 54–63 (PTGSNIHLGH) match the 'HIGH' region motif. The 'KMSKS' region motif lies at 248-252 (KMSKS). Lys251 is a binding site for ATP. Positions 351–414 (AKAFYLFSAV…LGKKTFRRLV (64 aa)) constitute an S4 RNA-binding domain.

This sequence belongs to the class-I aminoacyl-tRNA synthetase family. TyrS type 2 subfamily. Homodimer.

It is found in the cytoplasm. The enzyme catalyses tRNA(Tyr) + L-tyrosine + ATP = L-tyrosyl-tRNA(Tyr) + AMP + diphosphate + H(+). Catalyzes the attachment of tyrosine to tRNA(Tyr) in a two-step reaction: tyrosine is first activated by ATP to form Tyr-AMP and then transferred to the acceptor end of tRNA(Tyr). This chain is Tyrosine--tRNA ligase, found in Synechococcus sp. (strain CC9605).